A 107-amino-acid chain; its full sequence is Glutaredoxin 4 (107 aa).

The Glutaredoxin domain occupies 4-106; the sequence is LDKIKKQISE…TLLAEVAAKH (103 aa). Residue lysine 21 coordinates glutathione. Cysteine 29 provides a ligand contact to [2Fe-2S] cluster. Glutathione is bound by residues arginine 58, phenylalanine 70, and 83-84; that span reads CD.

It belongs to the glutaredoxin family. Monothiol subfamily. As to quaternary structure, homodimer.

It is found in the cytoplasm. Functionally, monothiol glutaredoxin involved in the biogenesis of iron-sulfur clusters. The chain is Glutaredoxin 4 (grxD) from Haemophilus influenzae (strain 86-028NP).